Here is an 889-residue protein sequence, read N- to C-terminus: Cytoplasmic aconitate hydratase (889 aa).

Substrate-binding positions include glutamine 86 and 205–207; that span reads DSH. The [4Fe-4S] cluster site is built by cysteine 437, cysteine 503, and cysteine 506. Residues arginine 536, arginine 541, arginine 699, and 779–780 each bind substrate; that span reads SR.

The protein belongs to the aconitase/IPM isomerase family. As to quaternary structure, interacts (when associated with the 4Fe-4S) with FBXL5. Interacts with frataxin(81-210). The cofactor is [4Fe-4S] cluster.

Its subcellular location is the cytoplasm. The protein resides in the cytosol. The catalysed reaction is citrate = D-threo-isocitrate. Its function is as follows. Bifunctional iron sensor that switches between 2 activities depending on iron availability. Iron deprivation, promotes its mRNA binding activity through which it regulates the expression of genes involved in iron uptake, sequestration and utilization. Binds to iron-responsive elements (IRES) in the untranslated region of target mRNAs preventing for instance the translation of ferritin and aminolevulinic acid synthase and stabilizing the transferrin receptor mRNA. In terms of biological role, conversely, when cellular iron levels are high, binds a 4Fe-4S cluster which precludes RNA binding activity and promotes the aconitase activity, the isomerization of citrate to isocitrate via cis-aconitate. The sequence is that of Cytoplasmic aconitate hydratase (Aco1) from Mus musculus (Mouse).